A 262-amino-acid polypeptide reads, in one-letter code: PsbP domain-containing protein 6, chloroplastic (262 aa).

Cysteine 128 and cysteine 132 are oxidised to a cystine.

Belongs to the PsbP family.

The protein localises to the plastid. It localises to the chloroplast thylakoid lumen. Its function is as follows. May be involved in the redox regulation of photosystem II. The sequence is that of PsbP domain-containing protein 6, chloroplastic (PPD6) from Arabidopsis thaliana (Mouse-ear cress).